Reading from the N-terminus, the 425-residue chain is MSTIIDIHAREILDSRGNPTVEVDVTLESGAFGRAAVPSGASTGAHEAVEKRDGDTSRYMGKGVLEAVAAVNGEIAEMLVGFDATDQVGIDRTMIEMDGTPNKGRLGANAILGVSLAVAKAAAEFTNQPLFRYVGGASARVLPVPMMNIINGGEHADNPIDIQEFMIMPVAAKNVRDAIRMGSEVFHTLKKELAAGGFNTGIGDEGGFAPNISSTRQALDYILRSIEKAGYKPGEDIYLALDCASTEYFKGGKYEMKGEGKSLTSAENVDYLAALCADYPIISIEDGCAEDDWDGWKLLTDRLGAKVQLVGDDLFVTNPKRLEQGIKAGVGNSMLVKVNQIGSLTETLMAVDMAHRARYTNVMSHRSGETEDSTIADLAVATNCGQIKTGSLSRSDRLAKYNQLIRIEEMLGEVAEYAGRSILKG.

Position 163 (Q163) interacts with (2R)-2-phosphoglycerate. E205 functions as the Proton donor in the catalytic mechanism. Mg(2+)-binding residues include D242, E285, and D312. Residues K337, R366, S367, and K388 each contribute to the (2R)-2-phosphoglycerate site. K337 acts as the Proton acceptor in catalysis.

This sequence belongs to the enolase family. Mg(2+) is required as a cofactor.

Its subcellular location is the cytoplasm. The protein resides in the secreted. It localises to the cell surface. It carries out the reaction (2R)-2-phosphoglycerate = phosphoenolpyruvate + H2O. It participates in carbohydrate degradation; glycolysis; pyruvate from D-glyceraldehyde 3-phosphate: step 4/5. Functionally, catalyzes the reversible conversion of 2-phosphoglycerate (2-PG) into phosphoenolpyruvate (PEP). It is essential for the degradation of carbohydrates via glycolysis. The chain is Enolase from Cereibacter sphaeroides (strain ATCC 17025 / ATH 2.4.3) (Rhodobacter sphaeroides).